Consider the following 363-residue polypeptide: Anhydro-N-acetylmuramic acid kinase (363 aa).

ATP is bound at residue 10–17 (GTSLDGMD).

The protein belongs to the anhydro-N-acetylmuramic acid kinase family.

The enzyme catalyses 1,6-anhydro-N-acetyl-beta-muramate + ATP + H2O = N-acetyl-D-muramate 6-phosphate + ADP + H(+). The protein operates within amino-sugar metabolism; 1,6-anhydro-N-acetylmuramate degradation. It functions in the pathway cell wall biogenesis; peptidoglycan recycling. Catalyzes the specific phosphorylation of 1,6-anhydro-N-acetylmuramic acid (anhMurNAc) with the simultaneous cleavage of the 1,6-anhydro ring, generating MurNAc-6-P. Is required for the utilization of anhMurNAc either imported from the medium or derived from its own cell wall murein, and thus plays a role in cell wall recycling. Contributes to intrinsic fosfomycin resistance in P.aeruginosa. This is Anhydro-N-acetylmuramic acid kinase from Pseudomonas aeruginosa (strain ATCC 15692 / DSM 22644 / CIP 104116 / JCM 14847 / LMG 12228 / 1C / PRS 101 / PAO1).